The following is a 485-amino-acid chain: ATP-dependent protease ATPase subunit HslU (485 aa).

ATP contacts are provided by residues Ile-22 and 64–69; that span reads GVGKTE. Positions 146–189 are disordered; the sequence is KKTAATSAQPQDVSQASSGTTISLPSVSSTAQAEEHKAQNENDM. Over residues 149–177 the composition is skewed to polar residues; the sequence is AATSAQPQDVSQASSGTTISLPSVSSTAQ. Residues 178–189 show a composition bias toward basic and acidic residues; sequence AEEHKAQNENDM. ATP-binding residues include Asp-297, Glu-363, and Arg-435.

The protein belongs to the ClpX chaperone family. HslU subfamily. A double ring-shaped homohexamer of HslV is capped on each side by a ring-shaped HslU homohexamer. The assembly of the HslU/HslV complex is dependent on binding of ATP.

Its subcellular location is the cytoplasm. Its function is as follows. ATPase subunit of a proteasome-like degradation complex; this subunit has chaperone activity. The binding of ATP and its subsequent hydrolysis by HslU are essential for unfolding of protein substrates subsequently hydrolyzed by HslV. HslU recognizes the N-terminal part of its protein substrates and unfolds these before they are guided to HslV for hydrolysis. The chain is ATP-dependent protease ATPase subunit HslU from Treponema denticola (strain ATCC 35405 / DSM 14222 / CIP 103919 / JCM 8153 / KCTC 15104).